A 327-amino-acid polypeptide reads, in one-letter code: Cyclic AMP-responsive element-binding protein 1 (327 aa).

2 disordered regions span residues 1–26 (MTME…QQMT) and 94–113 (SEDS…RREI). The 60-residue stretch at 87 to 146 (QISTIAESEDSQESVDSVTDSQKRREILSRRPSYRKILNDLSSDAPGVPRIEEEKSEEET) folds into the KID domain. A Phosphoserine; by CaMK1, CaMK2, CaMK4, PKB/AKT1 or PKB/AKT2, RPS6KA3, RPS6KA4, RPS6KA5, SGK1 and TSSK4 modification is found at serine 119. A Glycyl lysine isopeptide (Lys-Gly) (interchain with G-Cter in SUMO2) cross-link involves residue lysine 122. Residues 125 to 148 (NDLSSDAPGVPRIEEEKSEEETSA) form a disordered region. The residue at position 128 (serine 128) is a Phosphoserine. Phosphoserine; by HIPK2 is present on serine 257. Residues 269–327 (ARKREVRLMKNREAARECRRKKKEYVKCLENRVAVLENQNKTLIEELKALKDLYCHKSD) form the bZIP domain. Residues 270-295 (RKREVRLMKNREAARECRRKKKEYVK) form a basic motif region. Residues lysine 271 and lysine 290 each participate in a glycyl lysine isopeptide (Lys-Gly) (interchain with G-Cter in SUMO1) cross-link. Residues 297 to 318 (LENRVAVLENQNKTLIEELKAL) are leucine-zipper.

It belongs to the bZIP family. As to quaternary structure, interacts with PPRC1. Binds DNA as a dimer. This dimer is stabilized by magnesium ions. Interacts, through the bZIP domain, with the coactivators CRTC1/TORC1, CRTC2/TORC2 and CRTC3/TORC3. When phosphorylated on Ser-119, binds CREBBP. Interacts with CREBL2; regulates CREB1 phosphorylation, stability and transcriptional activity. Interacts (phosphorylated form) with TOX3. Interacts with ARRB1. Binds to HIPK2. Interacts with SGK1. Interacts with TSSK4; this interaction facilitates phosphorylation on Ser-119. Forms a complex with KMT2A and CREBBP. Interacts with TOX4; CREB1 is required for full induction of TOX4-dependent activity and the interaction is increased by cAMP and inhibited by insulin. In terms of assembly, (Microbial infection) Interacts with hepatitis B virus/HBV protein X. (Microbial infection) Interacts with HTLV-1 protein Tax. Post-translationally, stimulated by phosphorylation. Phosphorylation of both Ser-119 and Ser-128 in the SCN regulates the activity of CREB and participates in circadian rhythm generation. Phosphorylation of Ser-119 allows CREBBP binding. In liver, phosphorylation is induced by fasting or glucagon in a circadian fashion. CREBL2 positively regulates phosphorylation at Ser-119 thereby stimulating CREB1 transcriptional activity. Phosphorylated upon calcium influx by CaMK4 and CaMK2 on Ser-119. CaMK4 is much more potent than CaMK2 in activating CREB. Phosphorylated by CaMK2 on Ser-128. Phosphorylation of Ser-128 blocks CREB-mediated transcription even when Ser-119 is phosphorylated. Phosphorylated by CaMK1. Phosphorylation of Ser-257 by HIPK2 in response to genotoxic stress promotes CREB1 activity, facilitating the recruitment of the coactivator CBP. Phosphorylated at Ser-119 by RPS6KA3, RPS6KA4 and RPS6KA5 in response to mitogenic or stress stimuli. Phosphorylated by TSSK4 on Ser-119. Sumoylated with SUMO1. Sumoylation on Lys-290, but not on Lys-271, is required for nuclear localization of this protein. Sumoylation is enhanced under hypoxia, promoting nuclear localization and stabilization.

The protein resides in the nucleus. Its function is as follows. Phosphorylation-dependent transcription factor that stimulates transcription upon binding to the DNA cAMP response element (CRE), a sequence present in many viral and cellular promoters. Transcription activation is enhanced by the TORC coactivators which act independently of Ser-119 phosphorylation. Involved in different cellular processes including the synchronization of circadian rhythmicity and the differentiation of adipose cells. Regulates the expression of apoptotic and inflammatory response factors in cardiomyocytes in response to ERFE-mediated activation of AKT signaling. The sequence is that of Cyclic AMP-responsive element-binding protein 1 (CREB1) from Homo sapiens (Human).